Reading from the N-terminus, the 781-residue chain is ATP-dependent RNA helicase rok1 (781 aa).

Disordered stretches follow at residues 7–108 (LSRG…KPKL) and 134–177 (QDEA…IYPQ). A compositionally biased stretch (basic residues) spans 48 to 57 (KRGKKRKRKG). Positions 66 to 75 (SGDEDDDASD) are enriched in acidic residues. Basic and acidic residues-rich tracts occupy residues 84 to 108 (TPEELAAKKDAELKADEPKKQKPKL) and 139 to 173 (TEEKPPKKQKKQKEDRKKQEEEEKKKKKKDEDKKQ). Positions 184–212 (ELKYTYGIHPVLADNITRQGFRVPTEVQM) match the Q motif motif. The region spanning 233–487 (DVKVEKGIDF…TKHIDKRAKR (255 aa)) is the Helicase ATP-binding domain. 246 to 253 (APTGSGKT) is an ATP binding site. Residues 323 to 386 (ESNEQEETEQ…SRAKGDQKFK (64 aa)) are disordered. Residues 339–369 (QDSDSDSEAESEPEEVMKIDEEEEEEEESDS) are compositionally biased toward acidic residues. A compositionally biased stretch (basic and acidic residues) spans 370–386 (DAEKKTESRAKGDQKFK). Residues 434–437 (DEAD) carry the DEAD box motif. In terms of domain architecture, Helicase C-terminal spans 527–689 (ALRQLLHPVS…GKDIDEKDTV (163 aa)). The tract at residues 718-781 (RGVESRRTGG…KAEEEWTGLD (64 aa)) is disordered. Residues 736–752 (SWERRRENNRREAIEAS) show a composition bias toward basic and acidic residues.

Belongs to the DEAD box helicase family. DDX52/ROK1 subfamily. Interacts with the U3 snoRNA and is associated with the 90S and 40S pre-ribosomes.

The protein localises to the nucleus. Its subcellular location is the nucleolus. The enzyme catalyses ATP + H2O = ADP + phosphate + H(+). In terms of biological role, ATP-dependent RNA helicase involved in 40S ribosomal subunit biogenesis. Required for the processing and cleavage of 35S pre-rRNA at sites A0, A1, and A2, leading to mature 18S rRNA. This chain is ATP-dependent RNA helicase rok1 (drh-16), found in Neurospora crassa (strain ATCC 24698 / 74-OR23-1A / CBS 708.71 / DSM 1257 / FGSC 987).